Here is a 141-residue protein sequence, read N- to C-terminus: Organic hydroperoxide resistance protein-like 1 (141 aa).

The interval 1 to 20 is disordered; it reads MAVNYETKATNTGGRNGHVQ.

The protein belongs to the OsmC/Ohr family.

The protein is Organic hydroperoxide resistance protein-like 1 of Staphylococcus saprophyticus subsp. saprophyticus (strain ATCC 15305 / DSM 20229 / NCIMB 8711 / NCTC 7292 / S-41).